The sequence spans 232 residues: Large ribosomal subunit protein uL1 (232 aa).

It belongs to the universal ribosomal protein uL1 family. As to quaternary structure, part of the 50S ribosomal subunit.

Its function is as follows. Binds directly to 23S rRNA. The L1 stalk is quite mobile in the ribosome, and is involved in E site tRNA release. Functionally, protein L1 is also a translational repressor protein, it controls the translation of the L11 operon by binding to its mRNA. This Chlamydia trachomatis serovar L2 (strain ATCC VR-902B / DSM 19102 / 434/Bu) protein is Large ribosomal subunit protein uL1.